The sequence spans 161 residues: Cyclic pyranopterin monophosphate synthase (161 aa).

Residues 75-77 and 113-114 each bind substrate; these read LCH and ME. The active site involves D128.

The protein belongs to the MoaC family. In terms of assembly, homohexamer; trimer of dimers.

The enzyme catalyses (8S)-3',8-cyclo-7,8-dihydroguanosine 5'-triphosphate = cyclic pyranopterin phosphate + diphosphate. The protein operates within cofactor biosynthesis; molybdopterin biosynthesis. Functionally, catalyzes the conversion of (8S)-3',8-cyclo-7,8-dihydroguanosine 5'-triphosphate to cyclic pyranopterin monophosphate (cPMP). This is Cyclic pyranopterin monophosphate synthase from Salmonella heidelberg (strain SL476).